The following is a 151-amino-acid chain: D-aminoacyl-tRNA deacylase (151 aa).

Positions 137-138 (GP) match the Gly-cisPro motif, important for rejection of L-amino acids motif.

The protein belongs to the DTD family. As to quaternary structure, homodimer.

It is found in the cytoplasm. The enzyme catalyses glycyl-tRNA(Ala) + H2O = tRNA(Ala) + glycine + H(+). It carries out the reaction a D-aminoacyl-tRNA + H2O = a tRNA + a D-alpha-amino acid + H(+). Functionally, an aminoacyl-tRNA editing enzyme that deacylates mischarged D-aminoacyl-tRNAs. Also deacylates mischarged glycyl-tRNA(Ala), protecting cells against glycine mischarging by AlaRS. Acts via tRNA-based rather than protein-based catalysis; rejects L-amino acids rather than detecting D-amino acids in the active site. By recycling D-aminoacyl-tRNA to D-amino acids and free tRNA molecules, this enzyme counteracts the toxicity associated with the formation of D-aminoacyl-tRNA entities in vivo and helps enforce protein L-homochirality. The sequence is that of D-aminoacyl-tRNA deacylase from Solibacter usitatus (strain Ellin6076).